The following is a 236-amino-acid chain: tRNA (guanine-N(7)-)-methyltransferase (236 aa).

Residues glutamate 68, glutamate 93, aspartate 120, and aspartate 143 each contribute to the S-adenosyl-L-methionine site. Aspartate 143 is a catalytic residue. Substrate contacts are provided by residues lysine 147, aspartate 179, and 212–215 (TKFE).

This sequence belongs to the class I-like SAM-binding methyltransferase superfamily. TrmB family.

The catalysed reaction is guanosine(46) in tRNA + S-adenosyl-L-methionine = N(7)-methylguanosine(46) in tRNA + S-adenosyl-L-homocysteine. The protein operates within tRNA modification; N(7)-methylguanine-tRNA biosynthesis. Functionally, catalyzes the formation of N(7)-methylguanine at position 46 (m7G46) in tRNA. This chain is tRNA (guanine-N(7)-)-methyltransferase, found in Nitrosococcus oceani (strain ATCC 19707 / BCRC 17464 / JCM 30415 / NCIMB 11848 / C-107).